The following is an 878-amino-acid chain: MNGNEIRKRFVAFFQQHGHTHVESSSLVPRNDPTLLFTNAGMVQFKSLFLGEERRDYSRAVSAQKCVRAGGKHNDLENVGRTARHHTFFEMLGNFSFGDYFKEEAIRLGWRFVTEDLGIDAQRLLVTVYSEDDEAYAIWTQQIGLPADKVIRIPTTDNFWSMGDTGPCGPCSEIFYDYGDTVAGGPPGSEDEDGDRFVEIWNLVFMQYDRSSDGTLTPLPKPSIDTGAGLERLASVLQGKTNNYDTDLFQPLIKAAAALAGVDDTTCSAEQLVSLRVIADHIRSVSFLIADGVLPSNEGRGYVLRRIMRRGMRHGRLLGLEQPFMHKLVETLGALMGDTYPELTAQRKTLAMVIETEEKRFAATLGTGLKHLEEAVAGLRMGDVLDGKTLFTLYDTFGFPLDLTADILRDREIGVDQEGFSACMKEQRERARAAWSGSGEASLGALYHPLLERVGASEFLGYVHESASASVVALIKNGAEVESLTAGDEGSVVCNQTPFYGESGGQVGDRGVIQLANGARFTVTDTQKPLPDLIVHHGKMVTGTVHLGDHAELQVDGATRQAIRLHHSATHLMHHALRAVLGEHVKQAGSHVSAERLRLDFSHFQGMSEEELRAVEDRVNGAILSNVSQETAVMTPQEAVAAGAMALFGEKYGDEVRVVRIGDSMELCGGTHVSRSGDMGIFHILSESAVAAGVRRLEAVCGGRARAIFRGDQEALKAAAALLKTQPNKLAEGIERLLGKQKELEKSLEKLQSAQAGGMVEALLEQAVEVGGIKLLAVEVKGVDGKALREMVDQVKDKLGSGVILLALGGDKVSLVAGVTKDLAGKRVKAGDLMAFAAAMVGGKGGGRPDMAQGGGTEVAAIPTMLTAIPGWLQEQLG.

Zn(2+)-binding residues include His567, His571, Cys668, and His672.

Belongs to the class-II aminoacyl-tRNA synthetase family. Zn(2+) serves as cofactor.

The protein resides in the cytoplasm. It catalyses the reaction tRNA(Ala) + L-alanine + ATP = L-alanyl-tRNA(Ala) + AMP + diphosphate. Catalyzes the attachment of alanine to tRNA(Ala) in a two-step reaction: alanine is first activated by ATP to form Ala-AMP and then transferred to the acceptor end of tRNA(Ala). Also edits incorrectly charged Ser-tRNA(Ala) and Gly-tRNA(Ala) via its editing domain. The protein is Alanine--tRNA ligase of Magnetococcus marinus (strain ATCC BAA-1437 / JCM 17883 / MC-1).